The chain runs to 279 residues: Tryptophan synthase alpha chain (279 aa).

Residues Glu50 and Asp61 each act as proton acceptor in the active site.

Belongs to the TrpA family. Tetramer of two alpha and two beta chains.

The enzyme catalyses (1S,2R)-1-C-(indol-3-yl)glycerol 3-phosphate + L-serine = D-glyceraldehyde 3-phosphate + L-tryptophan + H2O. Its pathway is amino-acid biosynthesis; L-tryptophan biosynthesis; L-tryptophan from chorismate: step 5/5. In terms of biological role, the alpha subunit is responsible for the aldol cleavage of indoleglycerol phosphate to indole and glyceraldehyde 3-phosphate. The chain is Tryptophan synthase alpha chain from Brucella suis (strain ATCC 23445 / NCTC 10510).